The chain runs to 714 residues: MISKSKTAAPDIDKLTKPKAKVELMRLRLAIEGHDKAYYQDDAPKIPDADYDALRRRLEAIEAKFPELLSASSPSQTVGAAPARGFSKVQHAVPMLSLGNAFSDDEVGEFVERVQRFLKLEDIPAIVAEPKIDGLSLSLRYENGTLVRAATRGDGFTGEDVTANVRTIADIPTTLKAKTIPAACELRGEVYMLKHDFLALNKRQEEAGDTVFANPRNSAAGSLRQKDVAITASRPLKFFAYAWGEMSDYPMESPTQHAMLAWLGDAGFTVNPEITLCHSVDDALAFYRRIGEQRAALPYDIDGVVYKVDRLDYQARLGFVSRSPRWAIAHKFAAEQAVTVLEKIDIQVGRTGALTPVARLQPVTVGGVVVQNATLHNEDYIKGVGSDGSPLRDGVDIREGDTVVVQRAGDVIPQIVTVVLDKRPADLPAYKFPHKCPVCGSHAAREEGEAVWRCTGALICPAQAVERLKHFVSRLAFDIDGLGEKQIVLFHERGWVREPADIFTLKARNAELKLEDLEGYGETSVRNLFAAIDARRNIELNRLIFALGIRHVGEGNAKLLARHYGSIDVFLAAMRAAAEGQTPEGNTSEAYQDLDNIAGIGDVVAEAVVEFFAEPRNVGALDALLREIEVLPVEQAKQDTAVAGKTVVFTGALTKFTRDEAKAAAERLGAKVAGSVSKKTDYVVAGEDAGSKLTKARDLGVAVLTEDEWLALIG.

NAD(+) is bound by residues 48-52, 97-98, and Glu129; these read DADYD and SL. The active-site N6-AMP-lysine intermediate is the Lys131. Arg152, Glu189, Lys307, and Lys331 together coordinate NAD(+). Residues Cys436, Cys439, Cys454, and Cys460 each coordinate Zn(2+). One can recognise a BRCT domain in the interval 637-714; that stretch reads KQDTAVAGKT…TEDEWLALIG (78 aa).

It belongs to the NAD-dependent DNA ligase family. LigA subfamily. Mg(2+) serves as cofactor. It depends on Mn(2+) as a cofactor.

The catalysed reaction is NAD(+) + (deoxyribonucleotide)n-3'-hydroxyl + 5'-phospho-(deoxyribonucleotide)m = (deoxyribonucleotide)n+m + AMP + beta-nicotinamide D-nucleotide.. DNA ligase that catalyzes the formation of phosphodiester linkages between 5'-phosphoryl and 3'-hydroxyl groups in double-stranded DNA using NAD as a coenzyme and as the energy source for the reaction. It is essential for DNA replication and repair of damaged DNA. This is DNA ligase from Rhodopseudomonas palustris (strain BisB5).